The chain runs to 558 residues: Factor VII-activating protease (558 aa).

A signal peptide spans 1–23; the sequence is MSVVMLVFRVLLLIALVGNSAIG. EGF-like domains follow at residues 71–107, 109–146, and 148–186; these read DDDP…SRCQ, VQNK…PDCS, and VLPV…RFCE. 18 cysteine pairs are disulfide-bonded: Cys75/Cys86, Cys80/Cys95, Cys97/Cys106, Cys113/Cys123, Cys118/Cys134, Cys136/Cys145, Cys152/Cys163, Cys157/Cys174, Cys176/Cys185, Cys192/Cys274, Cys213/Cys255, Cys244/Cys269, Cys299/Cys433, Cys345/Cys361, Cys353/Cys422, Cys445/Cys513, Cys475/Cys491, and Cys503/Cys531. The 84-residue stretch at 191–274 folds into the Kringle domain; the sequence is DCYVGDGYSY…KWEYCNVEVC (84 aa). Residues 312–553 enclose the Peptidase S1 domain; sequence IYGGFKSTAG…FLNWIKTTMH (242 aa). Residues His360 and Asp409 each act as charge relay system in the active site. The active-site Charge relay system is the Ser507.

This sequence belongs to the peptidase S1 family. As to quaternary structure, heterodimer; disulfide-linked. Heterodimer of a 50 kDa heavy and a 27 kDa light chain linked by a disulfide bond. Proteolytic cleavage at Gly-23 or Met-27 can give rise to the 50 kDa heavy chain (HC) and cleavage at Arg-311 or Lys-317 can give rise to the 27 kDa light chain (LC). The HC can undergo further proteolytic cleavage giving rise to a 26 kDa fragment. The LC can undergo further proteolytic cleavage at Arg-311 leading to a 17-kDa fragment and at Arg-478 leading to a 8-kDa fragment.

It is found in the secreted. In terms of biological role, cleaves the alpha-chain at multiple sites and the beta-chain between 'Lys-53' and 'Lys-54' but not the gamma-chain of fibrinogen and therefore does not initiate the formation of the fibrin clot and does not cause the fibrinolysis directly. It does not cleave (activate) prothrombin and plasminogen but converts the inactive single chain urinary plasminogen activator (pro-urokinase) to the active two chain form. Activates coagulation factor VII. May function as a tumor suppressor negatively regulating cell proliferation and cell migration. The sequence is that of Factor VII-activating protease from Rattus norvegicus (Rat).